The sequence spans 356 residues: Arginine kinase (356 aa).

The residue at position 2 (A2) is an N-acetylalanine. The Phosphagen kinase N-terminal domain occupies 9-91 (KLEAGFKKLE…FDPIIEDYHV (83 aa)). Residue 64-68 (GVGIY) coordinates L-arginine. One can recognise a Phosphagen kinase C-terminal domain in the interval 119 to 356 (YVISTRVRCG…LELIKMEKEM (238 aa)). ATP is bound by residues 122 to 126 (STRVR) and H185. E225 is an L-arginine binding site. R229 is a binding site for ATP. C271 is an L-arginine binding site. ATP-binding positions include 280 to 284 (RASVH) and 309 to 314 (RGTRGE). An L-arginine-binding site is contributed by E314.

It belongs to the ATP:guanido phosphotransferase family.

It catalyses the reaction L-arginine + ATP = N(omega)-phospho-L-arginine + ADP + H(+). In Penaeus monodon (Giant tiger prawn), this protein is Arginine kinase.